The sequence spans 389 residues: Succinate--CoA ligase [ADP-forming] subunit beta (389 aa).

Residues Lys46, 53 to 55 (GRG), Glu99, Cys102, and Glu107 each bind ATP. Residues Asn199 and Asp213 each coordinate Mg(2+). Substrate is bound by residues Asn264 and 321–323 (GIV).

Belongs to the succinate/malate CoA ligase beta subunit family. In terms of assembly, heterotetramer of two alpha and two beta subunits. It depends on Mg(2+) as a cofactor.

It catalyses the reaction succinate + ATP + CoA = succinyl-CoA + ADP + phosphate. It carries out the reaction GTP + succinate + CoA = succinyl-CoA + GDP + phosphate. Its pathway is carbohydrate metabolism; tricarboxylic acid cycle; succinate from succinyl-CoA (ligase route): step 1/1. Succinyl-CoA synthetase functions in the citric acid cycle (TCA), coupling the hydrolysis of succinyl-CoA to the synthesis of either ATP or GTP and thus represents the only step of substrate-level phosphorylation in the TCA. The beta subunit provides nucleotide specificity of the enzyme and binds the substrate succinate, while the binding sites for coenzyme A and phosphate are found in the alpha subunit. In Haemophilus influenzae (strain 86-028NP), this protein is Succinate--CoA ligase [ADP-forming] subunit beta.